The primary structure comprises 371 residues: Maltose/maltodextrin import ATP-binding protein MalK (371 aa).

One can recognise an ABC transporter domain in the interval 4–234; sequence VQLQNVTKAW…PADRFVAGFI (231 aa). 36 to 43 is an ATP binding site; it reads GPSGCGKS.

Belongs to the ABC transporter superfamily. Maltooligosaccharide importer (TC 3.A.1.1.1) family. The complex is composed of two ATP-binding proteins (MalK), two transmembrane proteins (MalG and MalK) and a solute-binding protein (MalE).

The protein localises to the cell inner membrane. It catalyses the reaction D-maltose(out) + ATP + H2O = D-maltose(in) + ADP + phosphate + H(+). Its function is as follows. Part of the ABC transporter complex MalEFGK involved in maltose/maltodextrin import. Responsible for energy coupling to the transport system. The chain is Maltose/maltodextrin import ATP-binding protein MalK from Shigella flexneri serotype 5b (strain 8401).